Here is a 458-residue protein sequence, read N- to C-terminus: MSTEGGFGGTSSSDAQQSLQSFWPRVMEEIRNLTVKDFRVQELPLARIKKIMKLDEDVKMISAEAPVLFAKAAQIFITELTLRAWIHTEDNKRRTLQRNDIAMAITKFDQFDFLIDIVPRDELKPPKRQEEVRQSVTPAEPVQYYFTLAQQPTAVQVQGQQQGQQTTSSTTTIQPGQIIIAQPQQGQTTPVTMQVGEGQQVQIVQAQPQGQAQQAQSGTGQTMQVMQQIITNTGEIQQIPVQLNAGQLQYIRLAQPVSGTQVVQGQIQTLATNAQQGQRNASQGKPRRCLKETLQITQTEVQQGQQQFSQFTDGQRNSVQQARVSELTGEAEPREVKATGNSTPCTSSLPTTHPPSHRAGASCVCCSQPQQSSTSPPPSDALQWVVVEVSGTPNQLETHRELHAPLPGMTSLSPLHPSQQLYQIQQVTMPAGQDLAQPMFIQSANQPSDGQAPQVTGD.

Over residues 305 to 315 the composition is skewed to low complexity; that stretch reads QQQFSQFTDGQ. The segment at 305-379 is disordered; the sequence is QQQFSQFTDG…QQSSTSPPPS (75 aa). Residues 339–351 show a composition bias toward polar residues; that stretch reads TGNSTPCTSSLPT.

It belongs to the NFYC/HAP5 subunit family. Heterotrimeric transcription factor composed of three components, NF-YA, NF-YB and NF-YC. NF-YB and NF-YC must interact and dimerize for NF-YA association and DNA binding.

The protein resides in the nucleus. Functionally, component of the sequence-specific heterotrimeric transcription factor (NF-Y) which specifically recognizes a 5'-CCAAT-3' box motif found in the promoters of its target genes. NF-Y can function as both an activator and a repressor, depending on its interacting cofactors. The polypeptide is Nuclear transcription factor Y subunit gamma (NFYC) (Homo sapiens (Human)).